The chain runs to 283 residues: Phosphatidylglycerol--prolipoprotein diacylglyceryl transferase (283 aa).

3 consecutive transmembrane segments (helical) span residues 14-34 (LGPL…ALFL), 56-76 (MLMY…VLFY), and 88-108 (IFMV…VLIA). R139 is a binding site for a 1,2-diacyl-sn-glycero-3-phospho-(1'-sn-glycerol). A helical membrane pass occupies residues 258-278 (MGQWLSLPMIVIGVALLVFFG).

The protein belongs to the Lgt family.

It is found in the cell inner membrane. It catalyses the reaction L-cysteinyl-[prolipoprotein] + a 1,2-diacyl-sn-glycero-3-phospho-(1'-sn-glycerol) = an S-1,2-diacyl-sn-glyceryl-L-cysteinyl-[prolipoprotein] + sn-glycerol 1-phosphate + H(+). The protein operates within protein modification; lipoprotein biosynthesis (diacylglyceryl transfer). Its function is as follows. Catalyzes the transfer of the diacylglyceryl group from phosphatidylglycerol to the sulfhydryl group of the N-terminal cysteine of a prolipoprotein, the first step in the formation of mature lipoproteins. This Chromobacterium violaceum (strain ATCC 12472 / DSM 30191 / JCM 1249 / CCUG 213 / NBRC 12614 / NCIMB 9131 / NCTC 9757 / MK) protein is Phosphatidylglycerol--prolipoprotein diacylglyceryl transferase.